We begin with the raw amino-acid sequence, 79 residues long: D-alanyl carrier protein (79 aa).

The Carrier domain occupies 1 to 77 (MDIKSEVLKI…KIIEGITELR (77 aa)). Residue S35 is modified to O-(pantetheine 4'-phosphoryl)serine.

The protein belongs to the DltC family. In terms of processing, 4'-phosphopantetheine is transferred from CoA to a specific serine of apo-DCP.

It is found in the cytoplasm. It functions in the pathway cell wall biogenesis; lipoteichoic acid biosynthesis. Functionally, carrier protein involved in the D-alanylation of lipoteichoic acid (LTA). The loading of thioester-linked D-alanine onto DltC is catalyzed by D-alanine--D-alanyl carrier protein ligase DltA. The DltC-carried D-alanyl group is further transferred to cell membrane phosphatidylglycerol (PG) by forming an ester bond, probably catalyzed by DltD. D-alanylation of LTA plays an important role in modulating the properties of the cell wall in Gram-positive bacteria, influencing the net charge of the cell wall. The sequence is that of D-alanyl carrier protein from Streptococcus mutans serotype c (strain ATCC 700610 / UA159).